A 610-amino-acid polypeptide reads, in one-letter code: DEAD-box ATP-dependent RNA helicase 9, mitochondrial (610 aa).

The transit peptide at 1 to 66 directs the protein to the mitochondrion; the sequence is MISTVLRRSI…SSPFGVKVRD (66 aa). The short motif at 116-144 is the Q motif element; the sequence is LAIADLGISPEIVKALKGRGIEKLFPIQK. The region spanning 147 to 321 is the Helicase ATP-binding domain; it reads LEPAMEGRDM…KKYLNNPLTI (175 aa). 160–167 is a binding site for ATP; sequence ARTGTGKT. Positions 269-272 match the DEAD box motif; that stretch reads DEAD. Positions 350-494 constitute a Helicase C-terminal domain; it reads IIGPLVKEHG…ELPSIAVERG (145 aa). A compositionally biased stretch (gly residues) spans 542–557; that stretch reads SGRSGGGGGSYGGSGG. The segment at 542-610 is disordered; sequence SGRSGGGGGS…FGSNDGKRSY (69 aa). Residues 558–572 show a composition bias toward low complexity; it reads SSSRYSGGSDRSSGF. Positions 573–585 are enriched in gly residues; that stretch reads GSFGSGGSSGGFG. The span at 586–596 shows a compositional bias: low complexity; that stretch reads SDRSSQSSGRS.

This sequence belongs to the DEAD box helicase family. DDX21/DDX50 subfamily.

The protein localises to the mitochondrion. It carries out the reaction ATP + H2O = ADP + phosphate + H(+). In Arabidopsis thaliana (Mouse-ear cress), this protein is DEAD-box ATP-dependent RNA helicase 9, mitochondrial (RH9).